Reading from the N-terminus, the 278-residue chain is MADS-box transcription factor PHERES 2 (278 aa).

In terms of domain architecture, MADS-box spans 1 to 60 (MKRKMKLSLIENSVSRKTTFTKRKKGMTKKLTELVTLCGVEACAVVYSPFNSIPEAWPSR).

In terms of assembly, interacts with AGL61/DIANA and AGL62. Male gametophyte, embryo and endosperm.

The protein resides in the nucleus. Probable transcription factor involved in the development of gametophytes and seeds. This chain is MADS-box transcription factor PHERES 2 (PHE2), found in Arabidopsis thaliana (Mouse-ear cress).